The sequence spans 325 residues: Tryptophan--tRNA ligase (325 aa).

Residues 9–11 and 17–18 each bind ATP; these read QPS and GN. The 'HIGH' region motif lies at 10-18; that stretch reads PSGILHIGN. L-tryptophan is bound at residue Asp132. Residues 144–146, Val184, and 191–195 contribute to the ATP site; these read GKD and KMSKS. The 'KMSKS' region signature appears at 191–195; that stretch reads KMSKS.

Belongs to the class-I aminoacyl-tRNA synthetase family. Homodimer.

The protein resides in the cytoplasm. It catalyses the reaction tRNA(Trp) + L-tryptophan + ATP = L-tryptophyl-tRNA(Trp) + AMP + diphosphate + H(+). In terms of biological role, catalyzes the attachment of tryptophan to tRNA(Trp). This is Tryptophan--tRNA ligase from Fusobacterium nucleatum subsp. nucleatum (strain ATCC 25586 / DSM 15643 / BCRC 10681 / CIP 101130 / JCM 8532 / KCTC 2640 / LMG 13131 / VPI 4355).